The sequence spans 475 residues: 3-hydroxyacyl-CoA dehydrogenase-like protein LAM1 (475 aa).

An NAD(+)-binding site is contributed by 99–104 (GTRPFA). Lys149 is a CoA binding site. Asn245 contacts NAD(+).

This sequence belongs to the 3-hydroxyacyl-CoA dehydrogenase family.

Its pathway is mycotoxin biosynthesis. Functionally, 3-hydroxyacyl-CoA dehydrogenase-like protein; part of the Tox1A locus, one of the 2 loci that mediate the biosynthesis of T-toxin, a family of linear polyketides 37 to 45 carbons in length, of which the major component is 41 carbons, and which leads to high virulence to maize. One of the PKSs (PKS1 or PKS2) could synthesize a precursor, used subsequently by the other PKS as starter unit, to add additional carbons. Variability in the length of the final carbon backbone C35-47 could be achieved by varying the number of condensation cycles, or use of different starter or extender units or might be due to decarboxylation of the penultimate product, catalyzed by DEC1. Additional proteins are required for the biosynthesis of T-toxin, including oxidoreductases RED1, RED2, RED3, LAM1 and OXI1, as well as esterase TOX9. The protein is 3-hydroxyacyl-CoA dehydrogenase-like protein LAM1 of Cochliobolus heterostrophus (strain C4 / ATCC 48331 / race T) (Southern corn leaf blight fungus).